Here is a 367-residue protein sequence, read N- to C-terminus: MYVKYLKLINFRNYKELNIELDKNINVFIGNNAQGKTNVLESIYYASIGRSHRTSKDKELIKWQESNSYIKIYVAKERLDKTIEIRVLKEGKKAINVNSININKLSELFGILNVVIFSPEDLSIVKESPSFRRKFLDIELSKLSKQYYYNLVQYQKVLNERNMLLKKGGDEVPNIIGVYDEQLARFGSNIIREREKYLKKLNDIGKKIHLEITSDKEEISFTYLSSIKNKNMDDGKIEEIFLQEIIKNRNSDIEKRYTSVGPHRDDFLININNVNTRSYGSQGQQRTATLTIKFASLDIIKDEIGEYPVLLLDDVLSELDSSRQKYILSSIRDIQTIITCTGIENIKKYLKNDAKIFKVENGECIEN.

Gly30 to Thr37 is an ATP binding site.

It belongs to the RecF family.

It localises to the cytoplasm. Its function is as follows. The RecF protein is involved in DNA metabolism; it is required for DNA replication and normal SOS inducibility. RecF binds preferentially to single-stranded, linear DNA. It also seems to bind ATP. The sequence is that of DNA replication and repair protein RecF from Clostridium tetani (strain Massachusetts / E88).